The primary structure comprises 251 residues: Triosephosphate isomerase (251 aa).

A substrate-binding site is contributed by 9–11 (NWK). Histidine 95 serves as the catalytic Electrophile. The active-site Proton acceptor is glutamate 167. Residues glycine 173, serine 213, and 234 to 235 (GG) contribute to the substrate site.

It belongs to the triosephosphate isomerase family. In terms of assembly, homodimer.

Its subcellular location is the cytoplasm. It carries out the reaction D-glyceraldehyde 3-phosphate = dihydroxyacetone phosphate. Its pathway is carbohydrate biosynthesis; gluconeogenesis. It participates in carbohydrate degradation; glycolysis; D-glyceraldehyde 3-phosphate from glycerone phosphate: step 1/1. Functionally, involved in the gluconeogenesis. Catalyzes stereospecifically the conversion of dihydroxyacetone phosphate (DHAP) to D-glyceraldehyde-3-phosphate (G3P). The protein is Triosephosphate isomerase of Trichlorobacter lovleyi (strain ATCC BAA-1151 / DSM 17278 / SZ) (Geobacter lovleyi).